Reading from the N-terminus, the 248-residue chain is PF03932 family protein CutC (248 aa).

It belongs to the CutC family. As to quaternary structure, homodimer.

Its subcellular location is the cytoplasm. The sequence is that of PF03932 family protein CutC from Escherichia coli O157:H7.